Reading from the N-terminus, the 349-residue chain is Ion-translocating oxidoreductase complex subunit D (349 aa).

3 consecutive transmembrane segments (helical) span residues 20–42, 77–99, and 124–144; these read VMQRVILCLLPGLVVQCAFFGWG, SAMLTAILIGVAIPPLAPWWMIV, and AMAAYVLLLVSFPVQMTTWIA. Position 185 is an FMN phosphoryl threonine (T185). 5 helical membrane-spanning segments follow: residues 212 to 232, 239 to 259, 265 to 285, 291 to 311, and 315 to 335; these read STGVGWFWVNLAYLAGGLVLL, WHISTGVLLGLFVASSIGFLL, ASPLMHLFSGATMLAAFFIAT, ATSPRGRIIFGALIGVLVYII, and GGYPDAFAFAVLLANLCAPFI.

It belongs to the NqrB/RnfD family. The complex is composed of six subunits: RnfA, RnfB, RnfC, RnfD, RnfE and RnfG. It depends on FMN as a cofactor.

Its subcellular location is the cell inner membrane. Functionally, part of a membrane-bound complex that couples electron transfer with translocation of ions across the membrane. This Shewanella baltica (strain OS185) protein is Ion-translocating oxidoreductase complex subunit D.